A 257-amino-acid chain; its full sequence is Transcriptional regulatory protein TrcR (257 aa).

In terms of domain architecture, Response regulatory spans 33-147 (RVLLVDDEPA…ELVARLRGLL (115 aa)). Position 82 is a 4-aspartylphosphate (Asp-82). The ompR/PhoB-type DNA-binding region spans 158-255 (DEALRVGDLT…VRGIGYMLRP (98 aa)).

Post-translationally, phosphorylated by TrcS.

Functionally, member of the two-component regulatory system TrcS/TrcR. Activates its own expression by binding specifically to the AT-rich sequence of the trcR promoter region. Also negatively regulates the expression of Rv1057 by binding to an AT-rich sequences within the Rv1057 upstream sequence. The TrcR-TrcS regulatory system may act as a transition regulatory system involved in adapting to an intracellular environment and transitioning from latency to reactivation. The protein is Transcriptional regulatory protein TrcR of Mycobacterium tuberculosis (strain ATCC 25618 / H37Rv).